Reading from the N-terminus, the 383-residue chain is Nuclear hormone receptor family member nhr-217 (383 aa).

The nuclear receptor DNA-binding region spans Ile53 to Gln127. 2 NR C4-type zinc fingers span residues Cys56 to Cys77 and Cys93 to Cys109. Residues Ile172–Phe383 enclose the NR LBD domain.

It belongs to the nuclear hormone receptor family.

The protein localises to the nucleus. In terms of biological role, orphan nuclear receptor. The protein is Nuclear hormone receptor family member nhr-217 (nhr-217) of Caenorhabditis elegans.